The sequence spans 298 residues: Elongation factor Ts (298 aa).

The involved in Mg(2+) ion dislocation from EF-Tu stretch occupies residues T79–V82.

This sequence belongs to the EF-Ts family.

The protein resides in the cytoplasm. Functionally, associates with the EF-Tu.GDP complex and induces the exchange of GDP to GTP. It remains bound to the aminoacyl-tRNA.EF-Tu.GTP complex up to the GTP hydrolysis stage on the ribosome. This is Elongation factor Ts from Cereibacter sphaeroides (strain ATCC 17029 / ATH 2.4.9) (Rhodobacter sphaeroides).